The primary structure comprises 180 residues: NAD(P)H-quinone oxidoreductase subunit 6, chloroplastic (180 aa).

Transmembrane regions (helical) follow at residues 10 to 30 (LLLA…VLLT), 32 to 52 (IIYS…FYII), 57 to 77 (FVAV…ILFA), 102 to 122 (IVCT…SWFG), and 153 to 173 (FLPF…AITI).

It belongs to the complex I subunit 6 family. As to quaternary structure, NDH is composed of at least 16 different subunits, 5 of which are encoded in the nucleus.

The protein resides in the plastid. Its subcellular location is the chloroplast thylakoid membrane. It carries out the reaction a plastoquinone + NADH + (n+1) H(+)(in) = a plastoquinol + NAD(+) + n H(+)(out). It catalyses the reaction a plastoquinone + NADPH + (n+1) H(+)(in) = a plastoquinol + NADP(+) + n H(+)(out). In terms of biological role, NDH shuttles electrons from NAD(P)H:plastoquinone, via FMN and iron-sulfur (Fe-S) centers, to quinones in the photosynthetic chain and possibly in a chloroplast respiratory chain. The immediate electron acceptor for the enzyme in this species is believed to be plastoquinone. Couples the redox reaction to proton translocation, and thus conserves the redox energy in a proton gradient. The sequence is that of NAD(P)H-quinone oxidoreductase subunit 6, chloroplastic (ndhG) from Cryptomeria japonica (Japanese cedar).